We begin with the raw amino-acid sequence, 189 residues long: Auxin-induced protein IAA4 (189 aa).

Positions 8–12 (LRLGL) match the EAR-like (transcriptional repression) motif. Residues 92–179 (GIFVKVSMDG…SCKRLRIMKG (88 aa)) form the PB1 domain.

The protein belongs to the Aux/IAA family. In terms of assembly, homodimers and heterodimers. In terms of processing, phosphorylated by phytochrome A in vitro.

It localises to the nucleus. Aux/IAA proteins are short-lived transcriptional factors that function as repressors of early auxin response genes at low auxin concentrations. Repression is thought to result from the interaction with auxin response factors (ARFs), proteins that bind to the auxin-responsive promoter element (AuxRE). Formation of heterodimers with ARF proteins may alter their ability to modulate early auxin response genes expression. This chain is Auxin-induced protein IAA4 (IAA4/5), found in Pisum sativum (Garden pea).